The following is a 351-amino-acid chain: Nicotinate-nucleotide--dimethylbenzimidazole phosphoribosyltransferase (351 aa).

E313 acts as the Proton acceptor in catalysis.

Belongs to the CobT family.

It carries out the reaction 5,6-dimethylbenzimidazole + nicotinate beta-D-ribonucleotide = alpha-ribazole 5'-phosphate + nicotinate + H(+). The protein operates within nucleoside biosynthesis; alpha-ribazole biosynthesis; alpha-ribazole from 5,6-dimethylbenzimidazole: step 1/2. Its function is as follows. Catalyzes the synthesis of alpha-ribazole-5'-phosphate from nicotinate mononucleotide (NAMN) and 5,6-dimethylbenzimidazole (DMB). The polypeptide is Nicotinate-nucleotide--dimethylbenzimidazole phosphoribosyltransferase (Mycobacterium leprae (strain Br4923)).